Consider the following 295-residue polypeptide: MAAAGQAEECLPLPAAESSKTSLPTPPAVPAGKKPKKCLVYPHPPRSSRLSRSVLRWLQGLDLSFFPRNVTRDFSNGYLVAEIFCIYYPWDLRLSSFENGTSLKVKLDNWAQIEKFLAKKKFKLPKELIHGTIHCKAGVPEILIQEIYTLLTHQEIRSIQDDLANFTDYIYQMRLPLVPRNTVSKSIKNNIRLSELLSNPNVLSNELKIEFLILLQMLQRKLSRKLNPGWFDVKPTVGEITIDRLPAHSYKRRYKSRGSKEKAAQPLSKSDNDGNARKEIHVKQSGNPCENTENL.

Positions 1–34 are disordered; the sequence is MAAAGQAEECLPLPAAESSKTSLPTPPAVPAGKK. The Calponin-homology (CH) domain maps to 48-154; that stretch reads SRLSRSVLRW…QEIYTLLTHQ (107 aa). The tract at residues 251 to 295 is disordered; the sequence is KRRYKSRGSKEKAAQPLSKSDNDGNARKEIHVKQSGNPCENTENL. A compositionally biased stretch (basic and acidic residues) spans 270-282; it reads SDNDGNARKEIHV. Residues 284–295 show a composition bias toward polar residues; that stretch reads QSGNPCENTENL.

In terms of tissue distribution, testis.

It localises to the nucleus. In terms of biological role, may play a role in apoptosis regulation. In Mus musculus (Mouse), this protein is Spermatogenesis-associated protein 4 (Spata4).